We begin with the raw amino-acid sequence, 272 residues long: Hematopoietically-expressed homeobox protein hhex (272 aa).

The homeobox DNA-binding region spans 137–196; that stretch reads RKGGQVRFSNDQTIELEKKFETQKYLSPPERKRLAKMLQLSERQVKTWFQNRRAKWRRLK. The interval 222–272 is disordered; the sequence is CLSAEQKSRESSLDDPTSSPTSQGNLDSEVSDDSDQEVDIEGDKGYYNCAH. The span at 250–261 shows a compositional bias: acidic residues; the sequence is EVSDDSDQEVDI.

First expressed in the dorsal endomesoderm of the gastrula stage embryo. The dorsal endomesoderm contributes to forming the embryonic liver, and expression continues in the liver throughout development. Also expressed in precursors of the developing thyroid gland, and beginning at the tailbud stage, expressed in the ventral region of the head. Also transiently expressed in the endothelial layer of developing vascular tissues of the embryo, beginning at the tailbud stages.

It is found in the nucleus. Its function is as follows. Recognizes the DNA sequence 5'-ATTAA-3'. Transcriptional repressor. Regulates the differentiation of both endothelial and blood cells. Probably plays a role in the proliferation of vascular endothelial cells during blood vessel development. Establishes anterior identity at two levels; acts early to enhance canonical wnt-signaling by repressing expression of tle4, and acts later to inhibit nodal-signaling by directly targeting nodal/nr1 and nodal2/nr2. May play a role in liver development. Induces heart development. This is Hematopoietically-expressed homeobox protein hhex from Xenopus laevis (African clawed frog).